We begin with the raw amino-acid sequence, 196 residues long: 3-isopropylmalate dehydratase small subunit (196 aa).

This sequence belongs to the LeuD family. LeuD type 1 subfamily. As to quaternary structure, heterodimer of LeuC and LeuD.

The catalysed reaction is (2R,3S)-3-isopropylmalate = (2S)-2-isopropylmalate. It participates in amino-acid biosynthesis; L-leucine biosynthesis; L-leucine from 3-methyl-2-oxobutanoate: step 2/4. Its function is as follows. Catalyzes the isomerization between 2-isopropylmalate and 3-isopropylmalate, via the formation of 2-isopropylmaleate. The polypeptide is 3-isopropylmalate dehydratase small subunit (Herpetosiphon aurantiacus (strain ATCC 23779 / DSM 785 / 114-95)).